Reading from the N-terminus, the 513-residue chain is GMP synthase [glutamine-hydrolyzing] (513 aa).

Residues 8–198 enclose the Glutamine amidotransferase type-1 domain; that stretch reads MILVLDFGSQ…VFGVCDCDGK (191 aa). Cys-85 (nucleophile) is an active-site residue. Catalysis depends on residues His-172 and Glu-174. Residues 199–388 enclose the GMPS ATP-PPase domain; sequence WSMENFIEIE…LGIPDDIVWR (190 aa). Residue 226-232 participates in ATP binding; that stretch reads SGGVDSS.

Homodimer.

It carries out the reaction XMP + L-glutamine + ATP + H2O = GMP + L-glutamate + AMP + diphosphate + 2 H(+). It functions in the pathway purine metabolism; GMP biosynthesis; GMP from XMP (L-Gln route): step 1/1. Catalyzes the synthesis of GMP from XMP. The protein is GMP synthase [glutamine-hydrolyzing] of Bacillus pumilus (strain SAFR-032).